The following is a 644-amino-acid chain: 1,4-alpha-glucan branching enzyme GlgB (644 aa).

Aspartate 309 acts as the Nucleophile in catalysis. Glutamate 362 functions as the Proton donor in the catalytic mechanism.

Belongs to the glycosyl hydrolase 13 family. GlgB subfamily. In terms of assembly, monomer.

The enzyme catalyses Transfers a segment of a (1-&gt;4)-alpha-D-glucan chain to a primary hydroxy group in a similar glucan chain.. It functions in the pathway glycan biosynthesis; glycogen biosynthesis. Its function is as follows. Catalyzes the formation of the alpha-1,6-glucosidic linkages in glycogen by scission of a 1,4-alpha-linked oligosaccharide from growing alpha-1,4-glucan chains and the subsequent attachment of the oligosaccharide to the alpha-1,6 position. In Cutibacterium acnes (strain DSM 16379 / KPA171202) (Propionibacterium acnes), this protein is 1,4-alpha-glucan branching enzyme GlgB.